The following is a 311-amino-acid chain: Ribose-phosphate pyrophosphokinase (311 aa).

ATP is bound by residues 37–39 and 96–97; these read DGE and RQ. Positions 130 and 170 each coordinate Mg(2+). Residue Lys193 is part of the active site. Residues Arg195, Asp219, and 223–227 each bind D-ribose 5-phosphate; that span reads DTAGT.

Belongs to the ribose-phosphate pyrophosphokinase family. Class I subfamily. In terms of assembly, homohexamer. Requires Mg(2+) as cofactor.

The protein resides in the cytoplasm. The catalysed reaction is D-ribose 5-phosphate + ATP = 5-phospho-alpha-D-ribose 1-diphosphate + AMP + H(+). It functions in the pathway metabolic intermediate biosynthesis; 5-phospho-alpha-D-ribose 1-diphosphate biosynthesis; 5-phospho-alpha-D-ribose 1-diphosphate from D-ribose 5-phosphate (route I): step 1/1. Functionally, involved in the biosynthesis of the central metabolite phospho-alpha-D-ribosyl-1-pyrophosphate (PRPP) via the transfer of pyrophosphoryl group from ATP to 1-hydroxyl of ribose-5-phosphate (Rib-5-P). In Aquifex aeolicus (strain VF5), this protein is Ribose-phosphate pyrophosphokinase.